The chain runs to 172 residues: Adenine phosphoribosyltransferase (172 aa).

The protein belongs to the purine/pyrimidine phosphoribosyltransferase family. Homodimer.

The protein localises to the cytoplasm. It carries out the reaction AMP + diphosphate = 5-phospho-alpha-D-ribose 1-diphosphate + adenine. The protein operates within purine metabolism; AMP biosynthesis via salvage pathway; AMP from adenine: step 1/1. Functionally, catalyzes a salvage reaction resulting in the formation of AMP, that is energically less costly than de novo synthesis. This is Adenine phosphoribosyltransferase from Exiguobacterium sp. (strain ATCC BAA-1283 / AT1b).